A 90-amino-acid polypeptide reads, in one-letter code: MEIKNKTRIGHVISDKMEKTIVVGIDVVKRHPLYKKTYRRTMKYLVHDEKNEAKIGDMIEIVECRPISKGKYWRLSKIITKGHIVAAQEA.

Belongs to the universal ribosomal protein uS17 family. As to quaternary structure, part of the 30S ribosomal subunit.

One of the primary rRNA binding proteins, it binds specifically to the 5'-end of 16S ribosomal RNA. The chain is Small ribosomal subunit protein uS17 from Dehalococcoides mccartyi (strain ATCC BAA-2100 / JCM 16839 / KCTC 5957 / BAV1).